Consider the following 395-residue polypeptide: DNA polymerase IV (395 aa).

A UmuC domain is found at 7–187; it reads FFHVDIDAFF…LPLKDVWGVG (181 aa). Mg(2+) contacts are provided by aspartate 11 and aspartate 105. Residue glutamate 106 is part of the active site.

Belongs to the DNA polymerase type-Y family. As to quaternary structure, monomer. Mg(2+) serves as cofactor.

The protein localises to the cytoplasm. The catalysed reaction is DNA(n) + a 2'-deoxyribonucleoside 5'-triphosphate = DNA(n+1) + diphosphate. In terms of biological role, poorly processive, error-prone DNA polymerase involved in untargeted mutagenesis. Copies undamaged DNA at stalled replication forks, which arise in vivo from mismatched or misaligned primer ends. These misaligned primers can be extended by PolIV. Exhibits no 3'-5' exonuclease (proofreading) activity. May be involved in translesional synthesis, in conjunction with the beta clamp from PolIII. This Treponema denticola (strain ATCC 35405 / DSM 14222 / CIP 103919 / JCM 8153 / KCTC 15104) protein is DNA polymerase IV.